The chain runs to 318 residues: 3'-5' exoribonuclease YhaM (318 aa).

The 117-residue stretch at 163–279 (HVVSMLDLAK…LHYIDNLDAK (117 aa)) folds into the HD domain.

It belongs to the YhaM family.

Functionally, shows a 3'-5' exoribonuclease activity. The polypeptide is 3'-5' exoribonuclease YhaM (Bacillus cytotoxicus (strain DSM 22905 / CIP 110041 / 391-98 / NVH 391-98)).